The chain runs to 563 residues: Pre-hexon-linking protein IIIa (563 aa).

The tract at residues 1–117 is peripentonal hexon-tethering domain; sequence MRKRRTLTAP…ALLHRVSKYN (117 aa). A binding to hexon-linking protein region spans residues 148–261; sequence GSLTALNSFL…FTDSVSISRD (114 aa). The residue at position 235 (S235) is a Phosphoserine; by host. T284 is subject to Phosphothreonine; by host. A disordered region spans residues 449 to 471; it reads RTESRSVSRVPTPASSRRSSVAM. A phosphoserine; by host mark is found at S452 and S456. Positions 462–471 are enriched in low complexity; it reads ASSRRSSVAM. 2 positions are modified to phosphoserine; by host: S475 and S486. The segment at 524-543 is disordered; that stretch reads SSAISSDESDDGMSKPDKFL. A propeptide spanning residues 549 to 563 is cleaved from the precursor; the sequence is GNPFAHLRPKLGRCL.

It belongs to the adenoviridae hexon-linking protein IIIa family. In terms of assembly, interacts with hexon proteins; this interaction tethers the peripentonal hexons to hexons situated in the facet. Interacts with the penton protein (via N-terminus). Interacts with packaging protein 3; this interaction is required to promote correct genome packaging. Post-translationally, cleaved near the C-terminus by the viral protease during virion maturation to form the mature protein.

The protein resides in the virion. Its subcellular location is the host nucleus. In terms of biological role, structural component of the virion that acts as a cement protein on the capsid exterior which mediates the interactions between the hexons, including the peripentonal hexons, and reaches all the way to the penton vertices. Two hexon linking proteins IIIa, one from each facet, stabilize the unique edge interface between a pair of facets. As the virus enters the host cell, hexon linking proteins IIIa are shed concomitant with virion acidification in the endosome. During virus assembly, seems to play a role in the serotype specificity of the packaging of viral DNA via its interaction with packaging protein 3. This chain is Pre-hexon-linking protein IIIa, found in Canis lupus familiaris (Dog).